An 870-amino-acid chain; its full sequence is Outer membrane usher protein FimD (870 aa).

The signal sequence occupies residues 1–27 (MKKTTWFAGRFPGYVSPLSSVALSVLA). The cysteines at positions 843 and 865 are disulfide-linked.

This sequence belongs to the fimbrial export usher family.

The protein localises to the cell outer membrane. Functionally, involved in the export and assembly of FimA fimbrial subunits across the outer membrane. This Salmonella typhimurium (strain LT2 / SGSC1412 / ATCC 700720) protein is Outer membrane usher protein FimD (fimD).